A 397-amino-acid polypeptide reads, in one-letter code: MSPRNSALERFRQHQKIPEKRWQRLAFPDVGLLLCWLALIVIGMVMVTSSSLSEAHVERLSTHHFAIRQGIFYVGSSIFAYIAFMLGTNFYREKAKFILGLAFLGLLLVYAPGIGVVVNGSRRWLNLGVINLQVGEFAKLAVFIFTAAYLQHHTQRLDHSWQPIIGLLAVTACFALMFYLQPDFGTMVVIVATVLGMLFLSGVSIWRLLLLGVLIAPAMVWVLISESYRLRRLTTFINPWEYQYDEGYQLVNSLISFGRGGLFGVGLGESVQKHQYLPEAHTDFIFSIIAEETGLVGALIVMAILMILVWRAFAIGYLADRMRKRFSSLLAYGIGLWLGLQSLINIGVTTGALPTKGLTLPLISYGGSSILMTSIALAILARIDAESRFIARLEGKI.

Residues 1 to 26 lie on the Cytoplasmic side of the membrane; that stretch reads MSPRNSALERFRQHQKIPEKRWQRLA. Residues 27–47 traverse the membrane as a helical segment; sequence FPDVGLLLCWLALIVIGMVMV. The Periplasmic segment spans residues 48–69; sequence TSSSLSEAHVERLSTHHFAIRQ. A helical transmembrane segment spans residues 70 to 90; the sequence is GIFYVGSSIFAYIAFMLGTNF. Residues 91–96 are Cytoplasmic-facing; the sequence is YREKAK. The chain crosses the membrane as a helical span at residues 97–117; the sequence is FILGLAFLGLLLVYAPGIGVV. At 118-126 the chain is on the periplasmic side; the sequence is VNGSRRWLN. A helical transmembrane segment spans residues 127–147; the sequence is LGVINLQVGEFAKLAVFIFTA. Over 148–159 the chain is Cytoplasmic; the sequence is AYLQHHTQRLDH. The helical transmembrane segment at 160-180 threads the bilayer; sequence SWQPIIGLLAVTACFALMFYL. The Periplasmic portion of the chain corresponds to 181-185; the sequence is QPDFG. The helical transmembrane segment at 186 to 206 threads the bilayer; sequence TMVVIVATVLGMLFLSGVSIW. Position 207 (Arg-207) is a topological domain, cytoplasmic. A helical membrane pass occupies residues 208–228; the sequence is LLLLGVLIAPAMVWVLISESY. Over 229 to 294 the chain is Periplasmic; the sequence is RLRRLTTFIN…IFSIIAEETG (66 aa). The chain crosses the membrane as a helical span at residues 295–315; that stretch reads LVGALIVMAILMILVWRAFAI. Residues 316–328 are Cytoplasmic-facing; that stretch reads GYLADRMRKRFSS. The chain crosses the membrane as a helical span at residues 329 to 349; the sequence is LLAYGIGLWLGLQSLINIGVT. At 350–359 the chain is on the periplasmic side; the sequence is TGALPTKGLT. Residues 360 to 380 form a helical membrane-spanning segment; it reads LPLISYGGSSILMTSIALAIL. Residues 381–397 are Cytoplasmic-facing; that stretch reads ARIDAESRFIARLEGKI.

Belongs to the SEDS family. FtsW subfamily.

Its subcellular location is the cell inner membrane. The enzyme catalyses [GlcNAc-(1-&gt;4)-Mur2Ac(oyl-L-Ala-gamma-D-Glu-L-Lys-D-Ala-D-Ala)](n)-di-trans,octa-cis-undecaprenyl diphosphate + beta-D-GlcNAc-(1-&gt;4)-Mur2Ac(oyl-L-Ala-gamma-D-Glu-L-Lys-D-Ala-D-Ala)-di-trans,octa-cis-undecaprenyl diphosphate = [GlcNAc-(1-&gt;4)-Mur2Ac(oyl-L-Ala-gamma-D-Glu-L-Lys-D-Ala-D-Ala)](n+1)-di-trans,octa-cis-undecaprenyl diphosphate + di-trans,octa-cis-undecaprenyl diphosphate + H(+). It functions in the pathway cell wall biogenesis; peptidoglycan biosynthesis. In terms of biological role, peptidoglycan polymerase that is essential for cell division. In Dichelobacter nodosus (strain VCS1703A), this protein is Probable peptidoglycan glycosyltransferase FtsW.